The following is a 329-amino-acid chain: Chlorophyllase-1, chloroplastic (329 aa).

The N-terminal 21 residues, methionine 1–threonine 21, are a transit peptide targeting the chloroplast. The GXSXG signature appears at glycine 145 to glycine 149. Catalysis depends on serine 147, which acts as the Nucleophile. Catalysis depends on charge relay system residues aspartate 169 and histidine 242.

Belongs to the AB hydrolase superfamily. Lipase family.

It is found in the plastid. Its subcellular location is the chloroplast. The catalysed reaction is a chlorophyll + H2O = a chlorophyllide + phytol + H(+). It participates in porphyrin-containing compound metabolism; chlorophyll degradation. Its function is as follows. Catalyzes the hydrolysis of ester bond in chlorophyll to yield chlorophyllide and phytol. The sequence is that of Chlorophyllase-1, chloroplastic (CHLASE1) from Citrus sinensis (Sweet orange).